The chain runs to 1805 residues: Cytadherence high molecular weight protein 2 (1805 aa).

Coiled coils occupy residues Glu-28–Phe-838, Glu-914–Gln-1591, Asp-1632–Thr-1723, and Asn-1777–Ser-1804.

Its function is as follows. Component of the cytoskeleton-like structure which stabilizes the shape of the wall-less Mycoplasma. This cytoskeleton-like network of accessory proteins containing HMW proteins 1 to 5 allows the proper anchoring of cytadhesin proteins in the mycoplasmal membrane at the attachment organelle. The protein is Cytadherence high molecular weight protein 2 (hmw2) of Mycoplasma genitalium (strain ATCC 33530 / DSM 19775 / NCTC 10195 / G37) (Mycoplasmoides genitalium).